The sequence spans 215 residues: Probable transaldolase (215 aa).

The Schiff-base intermediate with substrate role is filled by K83.

This sequence belongs to the transaldolase family. Type 3B subfamily.

The protein resides in the cytoplasm. The enzyme catalyses D-sedoheptulose 7-phosphate + D-glyceraldehyde 3-phosphate = D-erythrose 4-phosphate + beta-D-fructose 6-phosphate. Its pathway is carbohydrate degradation; pentose phosphate pathway; D-glyceraldehyde 3-phosphate and beta-D-fructose 6-phosphate from D-ribose 5-phosphate and D-xylulose 5-phosphate (non-oxidative stage): step 2/3. Its function is as follows. Transaldolase is important for the balance of metabolites in the pentose-phosphate pathway. This chain is Probable transaldolase, found in Methanococcus maripaludis (strain C6 / ATCC BAA-1332).